Consider the following 335-residue polypeptide: Urokinase plasminogen activator surface receptor (335 aa).

The N-terminal stretch at 1 to 22 (MGHPLLLPLLLLLHTCVPASWG) is a signal peptide. UPAR/Ly6 domains follow at residues 23–114 (LRCM…RSRY), 115–213 (LECI…PQNG), and 214–305 (HQCY…YRKG). 3 disulfides stabilise this stretch: cysteine 25–cysteine 46, cysteine 28–cysteine 34, and cysteine 39–cysteine 67. N-linked (GlcNAc...) asparagine glycosylation is present at asparagine 74. 11 cysteine pairs are disulfide-bonded: cysteine 93-cysteine 98, cysteine 117-cysteine 144, cysteine 120-cysteine 127, cysteine 137-cysteine 169, cysteine 175-cysteine 192, cysteine 193-cysteine 198, cysteine 216-cysteine 244, cysteine 219-cysteine 227, cysteine 237-cysteine 263, cysteine 269-cysteine 287, and cysteine 288-cysteine 293. Residues asparagine 184, asparagine 194, asparagine 222, and asparagine 255 are each glycosylated (N-linked (GlcNAc...) asparagine). Residue glycine 305 is the site of GPI-anchor amidated glycine attachment. Positions 306–335 (AAPQPGPAHLSLTITLLMTARLWGGTLLWT) are cleaved as a propeptide — removed in mature form.

In terms of assembly, monomer. Interacts (via the UPAR/Ly6 domains) with SRPX2. Interacts with MRC2. Interacts with FAP (seprase); the interaction occurs at the cell surface of invadopodia membrane. Interacts with SORL1 (via N-terminal ectodomain); this interaction decreases PLAUR internalization. The ternary complex composed of PLAUR-PLAU-SERPINE1 also interacts with SORL1.

The protein resides in the cell membrane. The protein localises to the cell projection. Its subcellular location is the invadopodium membrane. In terms of biological role, acts as a receptor for urokinase plasminogen activator. Plays a role in localizing and promoting plasmin formation. Mediates the proteolysis-independent signal transduction activation effects of U-PA. It is subject to negative-feedback regulation by U-PA which cleaves it into an inactive form. The polypeptide is Urokinase plasminogen activator surface receptor (PLAUR) (Chlorocebus aethiops (Green monkey)).